Reading from the N-terminus, the 335-residue chain is Gibberellin 2-beta-dioxygenase 3 (335 aa).

Residues Glu175–Pro278 form the Fe2OG dioxygenase domain. Residues His202, Asp204, and His259 each contribute to the Fe cation site. Residue Arg269 is part of the active site.

Belongs to the iron/ascorbate-dependent oxidoreductase family. GA2OX subfamily. It depends on Fe(2+) as a cofactor. In terms of tissue distribution, not expressed in the apex.

It carries out the reaction gibberellin A1 + 2-oxoglutarate + O2 = gibberellin A8 + succinate + CO2. It functions in the pathway plant hormone biosynthesis; gibberellin biosynthesis. Functionally, catalyzes the 2-beta-hydroxylation of several biologically active gibberellins, leading to the homeostatic regulation of their endogenous level. Catabolism of gibberellins (GAs) plays a central role in plant development. Converts GA9/GA20 to GA51/GA29 and GA4/GA1 to GA34/GA8. This Arabidopsis thaliana (Mouse-ear cress) protein is Gibberellin 2-beta-dioxygenase 3 (GA2OX3).